Here is a 62-residue protein sequence, read N- to C-terminus: uncharacterized protein (62 aa).

Residues Phe15–Leu37 form a helical membrane-spanning segment. The segment covering Thr41–Ser56 has biased composition (low complexity). The interval Thr41–Gly62 is disordered.

Its subcellular location is the membrane. This is an uncharacterized protein from Dictyostelium discoideum (Social amoeba).